The chain runs to 157 residues: Protein Smg (157 aa).

This sequence belongs to the Smg family.

The chain is Protein Smg from Pectobacterium atrosepticum (strain SCRI 1043 / ATCC BAA-672) (Erwinia carotovora subsp. atroseptica).